We begin with the raw amino-acid sequence, 383 residues long: Putative glutamate--cysteine ligase 2 (383 aa).

This sequence belongs to the glutamate--cysteine ligase type 2 family. YbdK subfamily.

The catalysed reaction is L-cysteine + L-glutamate + ATP = gamma-L-glutamyl-L-cysteine + ADP + phosphate + H(+). Functionally, ATP-dependent carboxylate-amine ligase which exhibits weak glutamate--cysteine ligase activity. This chain is Putative glutamate--cysteine ligase 2, found in Legionella pneumophila subsp. pneumophila (strain Philadelphia 1 / ATCC 33152 / DSM 7513).